We begin with the raw amino-acid sequence, 228 residues long: MKSAFTLSLALVAVTATISAAADDNCSFGCLDVYKPVCGSNGETYSNSCYLRLASCKSNNGITEAGDGECASTPASSATPSPVTSSTGSTSGTVGCPDMCLDVYDPVSDENGKEYSNQCYMEMAKCKGTGYDDNKRSGNPGISTLDAERKLAFAPGYQGPPCGDMLCPDNYAPVCGSDGETYPNECDLGITSCNHPEQNITMVGEGTLPVTGAATATATATAEVVTRW.

Residues 1 to 22 form the signal peptide; that stretch reads MKSAFTLSLALVAVTATISAAA. 3 consecutive Kazal-like domains span residues 23–72, 90–127, and 156–208; these read DDNC…ECAS, TSGT…AKCK, and GYQG…EGTL. Residue N25 is glycosylated (N-linked (GlcNAc...) asparagine). Intrachain disulfides connect C26–C56, C30–C49, and C38–C70. The disordered stretch occupies residues 69–92; the sequence is ECASTPASSATPSPVTSSTGSTSG. Residues 71-92 show a composition bias toward low complexity; the sequence is ASTPASSATPSPVTSSTGSTSG. 4 disulfides stabilise this stretch: C96-C126, C100-C119, C162-C193, and C167-C186. N199 is a glycosylation site (N-linked (GlcNAc...) asparagine).

As to quaternary structure, interacts with host subtilisin-like protease P69B.

The protein localises to the secreted. Secreted effector that interacts with and inhibits the pathogenesis-related P69B subtilisin-like serine protease of host tomato. Inhibition of host proteases by a pathogen extracellular protease inhibitor forms a specific type of defense-counterdefense mechanism between plants and microbial pathogens. In Phytophthora infestans (strain T30-4) (Potato late blight agent), this protein is Extracellular protease inhibitor 10.